A 186-amino-acid polypeptide reads, in one-letter code: Lipid A palmitoyltransferase PagP (186 aa).

Residues 1–25 (MNVSKYVAIFFFVFIQLISVGKVFA) form the signal peptide. Residues histidine 58, aspartate 101, and serine 102 contribute to the active site.

It belongs to the lipid A palmitoyltransferase family. As to quaternary structure, homodimer.

The protein localises to the cell outer membrane. The enzyme catalyses lipid A (E. coli) + a 1-hexadecanoyl-2-acyl-sn-glycero-3-phosphocholine = hepta-acyl lipid A (E. coli) + a 2-acyl-sn-glycero-3-phosphocholine. The catalysed reaction is lipid IIA + a 1-hexadecanoyl-2-acyl-sn-glycero-3-phosphocholine = lipid IIB + a 2-acyl-sn-glycero-3-phosphocholine. It catalyses the reaction lipid IVA (E. coli) + a 1-hexadecanoyl-2-acyl-sn-glycero-3-phosphocholine = lipid IVB (E. coli) + a 2-acyl-sn-glycero-3-phosphocholine. Functionally, transfers a palmitate residue from the sn-1 position of a phospholipid to the N-linked hydroxymyristate on the proximal unit of lipid A or its precursors. The protein is Lipid A palmitoyltransferase PagP of Escherichia coli O6:H1 (strain CFT073 / ATCC 700928 / UPEC).